The chain runs to 415 residues: MTNLNYTPTIWTRADALKVNENDPTTTQPIVDADFPVMSDEVFIWDTMPLRSLDGTVVSVDGWSVIFTLTAQRNNNNSEYLDAEGNYDITSDWNNRHGRARICYWYSRTGKDWIFGGRVMAEGVSPTSREWAGTPILLNEDGDIDLYYTCVTPGATIAKVRGKVLTSEEGVTLAGFNEVKSLFSADGVYYQTESQNPYWNFRDPSPFIDPHDGKLYMVFEGNVAGERGSHVIGKQEMGTLPPGHRDVGNARYQAGCIGMAVAKDLSGDEWEILPPLVTAVGVNDQTERPHFVFQDGKYYLFTISHKFTYADGLTGPDGVYGFLSDNLTGPYSPMNGSGLVLGNPPSQPFQTYSHCVMPNGLVTSFIDNVPTSDGNYRIGGTEAPTVKIVLKGNRSFVERVFDYGYIPPMKNIILN.

Sucrose-binding residues include Trp-45, Asp-46, Ala-132, Arg-202, and Asp-203. Asp-46 serves as the catalytic Nucleophile. The Proton donor/acceptor role is filled by Glu-287.

It belongs to the glycosyl hydrolase 68 family.

It catalyses the reaction [6)-beta-D-fructofuranosyl-(2-&gt;](n) alpha-D-glucopyranoside + sucrose = [6)-beta-D-fructofuranosyl-(2-&gt;](n+1) alpha-D-glucopyranoside + D-glucose. Catalyzes the synthesis of levan, a fructose polymer, by transferring the fructosyl moiety from sucrose to a growing acceptor molecule. The sequence is that of Levansucrase from Rahnella aquatilis (strain ATCC 33071 / DSM 4594 / JCM 1683 / NBRC 105701 / NCIMB 13365 / CIP 78.65).